Reading from the N-terminus, the 534-residue chain is Cyclin-L1 (534 aa).

Cyclin-like regions lie at residues 94–196 (ELIQ…RVLK) and 209–293 (KIIV…KILQ). Residues 327 to 534 (LPEGAPVLDN…DHPGHSRHRR (208 aa)) are disordered. Basic and acidic residues predominate over residues 389–399 (KGRESRSRSGS). 2 stretches are compositionally biased toward low complexity: residues 400 to 412 (RDQS…SRSA) and 437 to 453 (RSGS…TYKS). The RS stretch occupies residues 400–436 (RDQSYSRSPSRSASPKHRKSESYSTSSGSKSHSRSRS). The span at 468-485 (SAHKARKSRSRSSSRSRS) shows a compositional bias: basic residues. Residues 486-495 (RSRERSDHSG) are compositionally biased toward basic and acidic residues. A compositionally biased stretch (basic residues) spans 496–511 (KYKKKSHYYRNHRHER). Residues 512 to 528 (SRSYERASHRYDRDHPG) are compositionally biased toward basic and acidic residues.

This sequence belongs to the cyclin family. Cyclin L subfamily.

It is found in the nucleus speckle. It localises to the nucleus. The protein resides in the nucleoplasm. Its function is as follows. Involved in pre-mRNA splicing. This Gallus gallus (Chicken) protein is Cyclin-L1 (CCNL1).